Consider the following 444-residue polypeptide: N-succinylarginine dihydrolase (444 aa).

Residues 19-28, Asn-110, and 137-138 each bind substrate; these read AGLSFGNVAS and HR. Glu-174 is a catalytic residue. Substrate is bound at residue Arg-214. His-250 is a catalytic residue. Substrate is bound by residues Asp-252 and Asn-362. Catalysis depends on Cys-368, which acts as the Nucleophile.

It belongs to the succinylarginine dihydrolase family. In terms of assembly, homodimer.

It catalyses the reaction N(2)-succinyl-L-arginine + 2 H2O + 2 H(+) = N(2)-succinyl-L-ornithine + 2 NH4(+) + CO2. It participates in amino-acid degradation; L-arginine degradation via AST pathway; L-glutamate and succinate from L-arginine: step 2/5. In terms of biological role, catalyzes the hydrolysis of N(2)-succinylarginine into N(2)-succinylornithine, ammonia and CO(2). In Shewanella baltica (strain OS185), this protein is N-succinylarginine dihydrolase.